The sequence spans 235 residues: LexA repressor (235 aa).

The H-T-H motif DNA-binding region spans 26–46 (FDEMKDALDLKSKSGIHRLIT). Active-site for autocatalytic cleavage activity residues include serine 156 and lysine 194.

It belongs to the peptidase S24 family. Homodimer.

It carries out the reaction Hydrolysis of Ala-|-Gly bond in repressor LexA.. Its function is as follows. Represses a number of genes involved in the response to DNA damage (SOS response), including recA and lexA. In the presence of single-stranded DNA, RecA interacts with LexA causing an autocatalytic cleavage which disrupts the DNA-binding part of LexA, leading to derepression of the SOS regulon and eventually DNA repair. This Paramagnetospirillum magneticum (strain ATCC 700264 / AMB-1) (Magnetospirillum magneticum) protein is LexA repressor.